The following is a 330-amino-acid chain: D-cysteine desulfhydrase (330 aa).

Residue lysine 52 is modified to N6-(pyridoxal phosphate)lysine.

This sequence belongs to the ACC deaminase/D-cysteine desulfhydrase family. Homodimer. Requires pyridoxal 5'-phosphate as cofactor.

It catalyses the reaction D-cysteine + H2O = hydrogen sulfide + pyruvate + NH4(+) + H(+). In terms of biological role, catalyzes the alpha,beta-elimination reaction of D-cysteine and of several D-cysteine derivatives. It could be a defense mechanism against D-cysteine. The protein is D-cysteine desulfhydrase of Yersinia pseudotuberculosis serotype O:1b (strain IP 31758).